A 225-amino-acid chain; its full sequence is PKHD-type hydroxylase YbiX (225 aa).

Residues 78–177 (TLSTPLFNRY…RVASFMWIQS (100 aa)) form the Fe2OG dioxygenase domain. Fe cation-binding residues include histidine 96, aspartate 98, and histidine 158. Position 168 (arginine 168) interacts with 2-oxoglutarate.

Fe(2+) serves as cofactor. The cofactor is L-ascorbate.

The chain is PKHD-type hydroxylase YbiX from Shigella sonnei (strain Ss046).